A 284-amino-acid polypeptide reads, in one-letter code: L-ribulose-5-phosphate 3-epimerase UlaE (284 aa).

The protein belongs to the L-ribulose-5-phosphate 3-epimerase family.

The catalysed reaction is L-ribulose 5-phosphate = L-xylulose 5-phosphate. Its pathway is cofactor degradation; L-ascorbate degradation; D-xylulose 5-phosphate from L-ascorbate: step 3/4. Functionally, catalyzes the isomerization of L-xylulose-5-phosphate to L-ribulose-5-phosphate. Is involved in the anaerobic L-ascorbate utilization. This chain is L-ribulose-5-phosphate 3-epimerase UlaE, found in Escherichia coli O157:H7 (strain EC4115 / EHEC).